The chain runs to 907 residues: Schlafen family member 13 (907 aa).

Positions 1-353 (MEIHPSLVVE…WVRMMVDIGP (353 aa)) are n'-domain region. Active-site residues include Glu205 and Glu210. 3 residues coordinate Zn(2+): His281, Cys283, and Cys318. ATP is bound at residue 604-611 (GMPGSGKT).

Belongs to the Schlafen family. Subgroup III subfamily. The cofactor is Mg(2+).

Its subcellular location is the cytoplasm. Functionally, endoribonuclease that cleaves tRNAs and rRNAs. Cleaves tRNAs 11 nucleotides from the 3'-terminus at the acceptor stem. Does not act on tRNA(Sec). This chain is Schlafen family member 13, found in Rattus norvegicus (Rat).